A 321-amino-acid chain; its full sequence is Fimbria adhesin protein (321 aa).

The first 18 residues, 1–18 (MKKLTLFIGLMALGTTSA), serve as a signal peptide directing secretion.

It belongs to the fimbrial protein family.

It localises to the fimbrium. This Klebsiella pneumoniae protein is Fimbria adhesin protein (mrkD).